The primary structure comprises 163 residues: Nodulin-13 (163 aa).

Positions 68 and 82 each coordinate kinetin. N(6)-dimethylallyladenine is bound by residues Gln68 and Tyr82. Trans-zeatin contacts are provided by Gln68, Tyr82, and Tyr133.

The protein belongs to the BetVI family. In terms of assembly, homodimer. In terms of tissue distribution, expressed in nodules, but not in leaves, stems, flowers and roots. Specifically located in the nodule cortex.

Functionally, may be involved in nodule organogenesis rather in the processes related to nitrogen fixation or interactions with the bacteria. May regulate nodulation by controlling the levels of freely available cytokinins. This Medicago truncatula (Barrel medic) protein is Nodulin-13 (N13).